The primary structure comprises 839 residues: Probable beta-glucosidase I (839 aa).

An N-linked (GlcNAc...) asparagine glycan is attached at N197. D225 is an active-site residue. The PA14 domain occupies 395 to 555 (DGKKGFSFRV…SQEELIAKAA (161 aa)).

It belongs to the glycosyl hydrolase 3 family.

Its subcellular location is the secreted. It catalyses the reaction Hydrolysis of terminal, non-reducing beta-D-glucosyl residues with release of beta-D-glucose.. It functions in the pathway glycan metabolism; cellulose degradation. Beta-glucosidases are one of a number of cellulolytic enzymes involved in the degradation of cellulosic biomass. Catalyzes the last step releasing glucose from the inhibitory cellobiose. The chain is Probable beta-glucosidase I (bglI) from Aspergillus terreus (strain NIH 2624 / FGSC A1156).